A 405-amino-acid chain; its full sequence is 11-beta-hydroxysteroid dehydrogenase type 2 (405 aa).

82–111 provides a ligand contact to NAD(+); that stretch reads TRAVLITGCDSGFGKETAKKLDSMGFTVLA. Ser-219 provides a ligand contact to substrate. Residue Tyr-232 is the Proton acceptor of the active site. Residues 335–339 form an essential for protein stability region; the sequence is RRRYY. Residues 377–387 show a composition bias toward low complexity; it reads QPGQPGTTPPQ. The segment at 377–405 is disordered; sequence QPGQPGTTPPQDAAQDPNLSPGPSPAVAR. A compositionally biased stretch (pro residues) spans 396–405; sequence SPGPSPAVAR.

This sequence belongs to the short-chain dehydrogenases/reductases (SDR) family. As to quaternary structure, interacts with ligand-free cytoplasmic NR3C2. In terms of tissue distribution, expressed in kidney, placenta, pancreas, prostate, ovary, small intestine and colon, and in lower levels in the spleen and testis. At midgestation, expressed at high levels in placenta and in fetal kidney and, at much lower levels, in fetal lung and testis.

Its subcellular location is the microsome. The protein localises to the endoplasmic reticulum. It carries out the reaction an 11beta-hydroxysteroid + NAD(+) = an 11-oxosteroid + NADH + H(+). The enzyme catalyses cortisol + NAD(+) = cortisone + NADH + H(+). The catalysed reaction is corticosterone + NAD(+) = 11-dehydrocorticosterone + NADH + H(+). It catalyses the reaction 11beta,17beta-dihydroxyandrost-4-ene-3-one + NAD(+) = 17beta-hydroxyandrost-4-ene-3,11-dione + NADH + H(+). It carries out the reaction 11beta-hydroxyandrost-4-ene-3,17-dione + NAD(+) = androst-4-ene-3,11,17-trione + NADH + H(+). It participates in steroid metabolism. With respect to regulation, inhibited by glycyrrhetinic acid (derived from liquorice). In terms of biological role, catalyzes the conversion of biologically active 11beta-hydroxyglucocorticoids (11beta-hydroxysteroid) such as cortisol, to inactive 11-ketoglucocorticoids (11-oxosteroid) such as cortisone, in the presence of NAD(+). Functions as a dehydrogenase (oxidase), thereby decreasing the concentration of active glucocorticoids, thus protecting the nonselective mineralocorticoid receptor from occupation by glucocorticoids. Plays an important role in maintaining glucocorticoids balance during preimplantation and protects the fetus from excessive maternal corticosterone exposure. Catalyzes the oxidation of 11beta-hydroxytestosterone (11beta,17beta-dihydroxyandrost-4-ene-3-one) to 11-ketotestosterone (17beta-hydroxyandrost-4-ene-3,11-dione), a major bioactive androgen. Catalyzes the conversion of 11beta-hydroxyandrostenedione (11beta-hydroxyandrost-4-ene-3,17-dione) to 11-ketoandrostenedione (androst-4-ene-3,11,17-trione), which can be further metabolized to 11-ketotestosterone. Converts 7-beta-25-dihydroxycholesterol to 7-oxo-25-hydroxycholesterol in vitro. 7-beta-25-dihydroxycholesterol (not 7-oxo-25-hydroxycholesterol) acts as a ligand for the G-protein-coupled receptor (GPCR) Epstein-Barr virus-induced gene 2 (EBI2) and may thereby regulate immune cell migration. May protect ovulating oocytes and fertilizing spermatozoa from the adverse effects of cortisol. This is 11-beta-hydroxysteroid dehydrogenase type 2 from Homo sapiens (Human).